Reading from the N-terminus, the 1222-residue chain is ATP-dependent helicase/nuclease subunit A (1222 aa).

One can recognise a UvrD-like helicase ATP-binding domain in the interval 39-495 (QKRTAQQIEA…ILLKENFRSQ (457 aa)). 60–67 (ASAGSGKT) lines the ATP pocket. Residues 524–810 (QLIAGSHAQT…NLMTIHKSKG (287 aa)) form the UvrD-like helicase C-terminal domain.

The protein belongs to the helicase family. AddA subfamily. In terms of assembly, heterodimer of AddA and AddB/RexB. Mg(2+) is required as a cofactor.

The enzyme catalyses Couples ATP hydrolysis with the unwinding of duplex DNA by translocating in the 3'-5' direction.. The catalysed reaction is ATP + H2O = ADP + phosphate + H(+). In terms of biological role, the heterodimer acts as both an ATP-dependent DNA helicase and an ATP-dependent, dual-direction single-stranded exonuclease. Recognizes the chi site generating a DNA molecule suitable for the initiation of homologous recombination. The AddA nuclease domain is required for chi fragment generation; this subunit has the helicase and 3' -&gt; 5' nuclease activities. The protein is ATP-dependent helicase/nuclease subunit A of Streptococcus pyogenes serotype M28 (strain MGAS6180).